The chain runs to 139 residues: Large-conductance mechanosensitive channel (139 aa).

A run of 2 helical transmembrane segments spans residues 16-36 (VIDL…VKSL) and 79-99 (GAFV…FLLV).

Belongs to the MscL family. In terms of assembly, homopentamer.

Its subcellular location is the cell inner membrane. Functionally, channel that opens in response to stretch forces in the membrane lipid bilayer. May participate in the regulation of osmotic pressure changes within the cell. The chain is Large-conductance mechanosensitive channel from Caulobacter vibrioides (strain ATCC 19089 / CIP 103742 / CB 15) (Caulobacter crescentus).